The following is a 145-amino-acid chain: Large ribosomal subunit protein uL15 (145 aa).

Positions 1 to 55 (MSLLKTLAPKAGSKHAPKRIGRGIGSGMGGTATKGHKGQLARTGGTVRRGFEGGQ) are disordered. The span at 12-21 (GSKHAPKRIG) shows a compositional bias: basic residues. A compositionally biased stretch (gly residues) spans 22-32 (RGIGSGMGGTA).

Belongs to the universal ribosomal protein uL15 family. As to quaternary structure, part of the 50S ribosomal subunit.

Binds to the 23S rRNA. The polypeptide is Large ribosomal subunit protein uL15 (Bdellovibrio bacteriovorus (strain ATCC 15356 / DSM 50701 / NCIMB 9529 / HD100)).